The following is a 73-amino-acid chain: Small ribosomal subunit protein bS18 (73 aa).

This sequence belongs to the bacterial ribosomal protein bS18 family. Part of the 30S ribosomal subunit. Forms a tight heterodimer with protein bS6.

In terms of biological role, binds as a heterodimer with protein bS6 to the central domain of the 16S rRNA, where it helps stabilize the platform of the 30S subunit. This chain is Small ribosomal subunit protein bS18, found in Prochlorococcus marinus (strain SARG / CCMP1375 / SS120).